The following is a 179-amino-acid chain: Protein YjaZ (179 aa).

The sequence is that of Protein YjaZ from Escherichia coli (strain K12).